Reading from the N-terminus, the 374-residue chain is tRNA 2-selenouridine synthase (374 aa).

The 125-residue stretch at 12–136 (FLRDVPMLDT…MRGFLLQTID (125 aa)) folds into the Rhodanese domain. The S-selanylcysteine intermediate role is filled by Cys-95.

The protein belongs to the SelU family. Monomer.

The catalysed reaction is 5-methylaminomethyl-2-thiouridine(34) in tRNA + selenophosphate + (2E)-geranyl diphosphate + H2O + H(+) = 5-methylaminomethyl-2-selenouridine(34) in tRNA + (2E)-thiogeraniol + phosphate + diphosphate. It carries out the reaction 5-methylaminomethyl-2-thiouridine(34) in tRNA + (2E)-geranyl diphosphate = 5-methylaminomethyl-S-(2E)-geranyl-thiouridine(34) in tRNA + diphosphate. It catalyses the reaction 5-methylaminomethyl-S-(2E)-geranyl-thiouridine(34) in tRNA + selenophosphate + H(+) = 5-methylaminomethyl-2-(Se-phospho)selenouridine(34) in tRNA + (2E)-thiogeraniol. The enzyme catalyses 5-methylaminomethyl-2-(Se-phospho)selenouridine(34) in tRNA + H2O = 5-methylaminomethyl-2-selenouridine(34) in tRNA + phosphate. Functionally, involved in the post-transcriptional modification of the uridine at the wobble position (U34) of tRNA(Lys), tRNA(Glu) and tRNA(Gln). Catalyzes the conversion of 2-thiouridine (S2U-RNA) to 2-selenouridine (Se2U-RNA). Acts in a two-step process involving geranylation of 2-thiouridine (S2U) to S-geranyl-2-thiouridine (geS2U) and subsequent selenation of the latter derivative to 2-selenouridine (Se2U) in the tRNA chain. This chain is tRNA 2-selenouridine synthase, found in Bordetella petrii (strain ATCC BAA-461 / DSM 12804 / CCUG 43448).